Reading from the N-terminus, the 680-residue chain is Leucine-rich repeat protein soc-2 homolog (680 aa).

The segment covering 1–19 has biased composition (low complexity); sequence MNLCSSGATASTTSLSSTG. Disordered regions lie at residues 1–54 and 73–149; these read MNLC…SDVS and TGTE…PIQA. Residues 26–49 are compositionally biased toward gly residues; the sequence is GVPGGGAEGGGGGGGSGNSGGGGK. The span at 73–86 shows a compositional bias: low complexity; it reads TGTEELSNANSPAN. Residues 87-96 show a composition bias toward gly residues; it reads GAGGASGSTG. A compositionally biased stretch (low complexity) spans 97-106; the sequence is SGQQPTGSNG. LRR repeat units follow at residues 161–182, 184–205, 207–228, 230–251, 253–274, 276–297, 299–320, 322–343, 345–367, 368–389, 392–413, 416–437, 440–461, 463–484, 486–507, 509–530, 532–553, 555–576, 578–600, and 602–623; these read RIKRLDLSKSSITVIPSTVKEC, HLTELYLYSNKIGQLPPEIGCL, SLRNLALNENSLTSLPESLQNC, QLKVLDLRHNKLAEIPPVIYRL, SLTTLYLRFNRITAVADDLRQL, NLTMLSLRENKIRELGSAIGAL, NLTTLDVSHNHLEHLPEDIGNC, NLSALDLQHNELLDIPDSIGNL, SLVRLGMRYNRLSSVPATLKNCK, SMDEFNVEGNGITQLPDGMLAS, GLTTITLSRNQFASYPTGGPAQ, NVYSINLEHNRIDKIPYGIFSR, GLTKLNMKENMLTALPLDIGTW, NMVELNLATNALQKLPDDIMNL, NLEILILSNNMLKKIPNTIGNL, RLRILDLEENRIEVLPHEIGLL, ELQRLILQTNQITMLPRSIGHL, NLTHLSVSENNLQFLPEEIGSL, SLENLYINQNPGLEKLPFELALC, and NLKYLNIDKCPLSTIPPEIQAG. Over residues 658 to 668 the composition is skewed to gly residues; sequence AGGNGGGGAAA. The disordered stretch occupies residues 658–680; the sequence is AGGNGGGGAAAAGGSASRSSDRR. Over residues 669–680 the composition is skewed to low complexity; that stretch reads AGGSASRSSDRR.

The protein belongs to the SHOC2 family.

Its function is as follows. Acts as a Ras effector and participates in MAPK pathway activation. Probably acts as a regulatory subunit of protein phosphatase that specifically dephosphorylates Raf kinase and stimulate Raf activity at specialized signaling complexes upon Ras activation. This chain is Leucine-rich repeat protein soc-2 homolog (Sur-8), found in Drosophila simulans (Fruit fly).